The sequence spans 778 residues: Hyperosmolality-gated Ca2+ permeable channel 1.4 (778 aa).

The next 10 helical transmembrane spans lie at 7-27 (IGLA…LFAI), 101-121 (IYLI…SILV), 158-178 (FWAH…VLMK), 375-395 (FVMH…IAFV), 427-447 (FLPG…LMIM), 467-487 (YYIF…SAFE), 512-532 (ATFF…GEIF), 584-604 (PVTP…YLVF), 626-646 (VHGR…GLMS), and 651-671 (VQST…HRFC). The disordered stretch occupies residues 738–778 (VVQTKRQRSRRTTVASSNASRGSSQSTPFNQLDLGKGKPET). Residues 753–763 (SSNASRGSSQS) are compositionally biased toward low complexity.

Belongs to the CSC1 (TC 1.A.17) family.

The protein resides in the membrane. Functionally, acts as an osmosensitive calcium-permeable cation channel. The protein is Hyperosmolality-gated Ca2+ permeable channel 1.4 of Arabidopsis thaliana (Mouse-ear cress).